Here is a 117-residue protein sequence, read N- to C-terminus: Small ribosomal subunit protein bS6m (117 aa).

This sequence belongs to the bacterial ribosomal protein bS6 family. In terms of assembly, component of the mitochondrial small ribosomal subunit (mt-SSU). Mature N.crassa 74S mitochondrial ribosomes consist of a small (37S) and a large (54S) subunit. The 37S small subunit contains a 16S ribosomal RNA (16S mt-rRNA) and 32 different proteins. The 54S large subunit contains a 23S rRNA (23S mt-rRNA) and 42 different proteins.

The protein localises to the mitochondrion. Its function is as follows. Component of the mitochondrial ribosome (mitoribosome), a dedicated translation machinery responsible for the synthesis of mitochondrial genome-encoded proteins, including at least some of the essential transmembrane subunits of the mitochondrial respiratory chain. The mitoribosomes are attached to the mitochondrial inner membrane and translation products are cotranslationally integrated into the membrane. This Neurospora crassa (strain ATCC 24698 / 74-OR23-1A / CBS 708.71 / DSM 1257 / FGSC 987) protein is Small ribosomal subunit protein bS6m (mrp17).